Consider the following 126-residue polypeptide: Small ribosomal subunit protein uS13 (126 aa).

Residues 98–126 form a disordered region; the sequence is PVRGQSTKNNARTRKGRKKTVANKKKATK. Residues 108–126 show a composition bias toward basic residues; the sequence is ARTRKGRKKTVANKKKATK.

Belongs to the universal ribosomal protein uS13 family. As to quaternary structure, part of the 30S ribosomal subunit. Forms a loose heterodimer with protein S19. Forms two bridges to the 50S subunit in the 70S ribosome.

Its function is as follows. Located at the top of the head of the 30S subunit, it contacts several helices of the 16S rRNA. In the 70S ribosome it contacts the 23S rRNA (bridge B1a) and protein L5 of the 50S subunit (bridge B1b), connecting the 2 subunits; these bridges are implicated in subunit movement. Contacts the tRNAs in the A and P-sites. This chain is Small ribosomal subunit protein uS13, found in Phocaeicola vulgatus (strain ATCC 8482 / DSM 1447 / JCM 5826 / CCUG 4940 / NBRC 14291 / NCTC 11154) (Bacteroides vulgatus).